Reading from the N-terminus, the 195-residue chain is Chromophore lyase CpcT/CpeT 2 (195 aa).

This sequence belongs to the CpcT/CpeT biliprotein lyase family.

Covalently attaches a chromophore to Cys residue(s) of phycobiliproteins. This Trichodesmium erythraeum (strain IMS101) protein is Chromophore lyase CpcT/CpeT 2.